The following is a 493-amino-acid chain: Trans-aconitate decarboxylase 1 (493 aa).

The interval 1 to 22 (MAPALNANPTTKRDELSAPSAS) is disordered.

It belongs to the class-II fumarase/aspartase family.

The protein resides in the cytoplasm. The protein localises to the cytosol. It localises to the nucleus. It carries out the reaction trans-aconitate + H(+) = itaconate + CO2. It functions in the pathway secondary metabolite biosynthesis. In terms of biological role, trans-aconitate decarboxylase; part of the gene cluster that mediates the biosynthesis of itaconic acid and 2-hydroxyparaconate. Cis-aconitate is secreted by the mitochondrial tricarboxylate transporter MTT1. In the cytosol cis-aconitate is converted into trans-aconitate via isomerization by the aconitate-delta-isomerase ADI1. Decarboxylation of trans-aconitate by the trans-aconitate decarboxylase TAD1 then leads then to the production of itaconic acid. The cytochrome P450 monooxygenase CYP3 further converts itaconate to 2-hydroxyparaconate via oxidation of the double bond, leading to a transient epoxide, which can subsequently be lactonized to produce 2-hydroxyparaconate. Secretion of itaconate and possibly 2-hydroxyparaconate into the medium is mediated by the major facilitator ITP1. The glyoxalase domain-containing protein RDO1 is not involved in the biosynthesis of itaconate and 2-hydroxyparaconate, however, it might play a role in the further conversion of 2-hydroxyparaconate to itatartarate. In Mycosarcoma maydis (Corn smut fungus), this protein is Trans-aconitate decarboxylase 1.